A 576-amino-acid chain; its full sequence is Arginine--tRNA ligase (576 aa).

Residues 122–132 (PNVAKQMHVGH) carry the 'HIGH' region motif.

This sequence belongs to the class-I aminoacyl-tRNA synthetase family. Monomer.

The protein localises to the cytoplasm. It catalyses the reaction tRNA(Arg) + L-arginine + ATP = L-arginyl-tRNA(Arg) + AMP + diphosphate. This is Arginine--tRNA ligase from Proteus mirabilis (strain HI4320).